Reading from the N-terminus, the 348-residue chain is tRNA pseudouridine synthase D (348 aa).

Residue D84 is the Nucleophile of the active site. Residues 162-308 form the TRUD domain; sequence GVPNYFGPQR…ARMDRRPLCL (147 aa).

This sequence belongs to the pseudouridine synthase TruD family.

It carries out the reaction uridine(13) in tRNA = pseudouridine(13) in tRNA. Functionally, responsible for synthesis of pseudouridine from uracil-13 in transfer RNAs. This chain is tRNA pseudouridine synthase D, found in Chromohalobacter salexigens (strain ATCC BAA-138 / DSM 3043 / CIP 106854 / NCIMB 13768 / 1H11).